A 300-amino-acid chain; its full sequence is GTPase Era (300 aa).

An Era-type G domain is found at 8–176; sequence RCGYVAIVGR…EKVIADHLPE (169 aa). The tract at residues 16–23 is G1; the sequence is GRPNVGKS. 16–23 provides a ligand contact to GTP; that stretch reads GRPNVGKS. Residues 42 to 46 form a G2 region; the sequence is QTTRH. The tract at residues 63-66 is G3; it reads DTPG. Residues 63–67 and 125–128 contribute to the GTP site; these read DTPGM and NKTD. Residues 125–128 form a G4 region; the sequence is NKTD. The G5 stretch occupies residues 155-157; that stretch reads ISA. Positions 199–283 constitute a KH type-2 domain; that stretch reads VREKIMRQLG…MLNLWVKVKG (85 aa).

Belongs to the TRAFAC class TrmE-Era-EngA-EngB-Septin-like GTPase superfamily. Era GTPase family. In terms of assembly, monomer.

The protein localises to the cytoplasm. It is found in the cell inner membrane. In terms of biological role, an essential GTPase that binds both GDP and GTP, with rapid nucleotide exchange. Plays a role in 16S rRNA processing and 30S ribosomal subunit biogenesis and possibly also in cell cycle regulation and energy metabolism. The polypeptide is GTPase Era (Pseudomonas fluorescens (strain Pf0-1)).